The sequence spans 376 residues: Succinyl-diaminopimelate desuccinylase (376 aa).

H68 is a Zn(2+) binding site. D70 is an active-site residue. A Zn(2+)-binding site is contributed by D101. The active-site Proton acceptor is E135. Zn(2+) contacts are provided by E136, E164, and H349.

The protein belongs to the peptidase M20A family. DapE subfamily. Homodimer. It depends on Zn(2+) as a cofactor. Co(2+) is required as a cofactor.

It carries out the reaction N-succinyl-(2S,6S)-2,6-diaminopimelate + H2O = (2S,6S)-2,6-diaminopimelate + succinate. The protein operates within amino-acid biosynthesis; L-lysine biosynthesis via DAP pathway; LL-2,6-diaminopimelate from (S)-tetrahydrodipicolinate (succinylase route): step 3/3. Its function is as follows. Catalyzes the hydrolysis of N-succinyl-L,L-diaminopimelic acid (SDAP), forming succinate and LL-2,6-diaminopimelate (DAP), an intermediate involved in the bacterial biosynthesis of lysine and meso-diaminopimelic acid, an essential component of bacterial cell walls. This chain is Succinyl-diaminopimelate desuccinylase, found in Marinobacter nauticus (strain ATCC 700491 / DSM 11845 / VT8) (Marinobacter aquaeolei).